A 254-amino-acid chain; its full sequence is MPASRRVLIAGNWKMNGLKSSLAEIEALAAGYDGDLKAKLDLLVCPPATLLISAAERLAGSGVQLGGQNCHPAPAGAHTGGISAEMLKDAGVTSVIVGHSERRTNLSESDAVVMAKVKAAWCFGLLPIVCVGETAEERDAGEAVGVVTRQVHQSLPEGCTASNLVIAYEPVWAIGTGRTPTPEDVANIHGTIRSVLRSQFGAEADGIRILYGGSVKPDNAATLMAVADVDGALVGGASLKAADFLAIARATPAR.

Residue 12-14 (NWK) participates in substrate binding. Residue His99 is the Electrophile of the active site. Catalysis depends on Glu169, which acts as the Proton acceptor. Substrate is bound by residues Gly175, Ser214, and 235–236 (GG).

Belongs to the triosephosphate isomerase family. As to quaternary structure, homodimer.

It is found in the cytoplasm. It carries out the reaction D-glyceraldehyde 3-phosphate = dihydroxyacetone phosphate. The protein operates within carbohydrate biosynthesis; gluconeogenesis. Its pathway is carbohydrate degradation; glycolysis; D-glyceraldehyde 3-phosphate from glycerone phosphate: step 1/1. Its function is as follows. Involved in the gluconeogenesis. Catalyzes stereospecifically the conversion of dihydroxyacetone phosphate (DHAP) to D-glyceraldehyde-3-phosphate (G3P). This Xanthobacter autotrophicus (strain ATCC BAA-1158 / Py2) protein is Triosephosphate isomerase.